The primary structure comprises 312 residues: Zinc transporter ZitB (312 aa).

The next 5 membrane-spanning stretches (helical) occupy residues 21–41 (LLFA…GGIL), 48–68 (LADA…LLVV), 90–110 (AAFV…WEAI), 123–143 (LMMV…WILH), and 164–184 (LLGS…GWTP).

Belongs to the cation diffusion facilitator (CDF) transporter (TC 2.A.4) family. SLC30A subfamily.

The protein localises to the cell inner membrane. In terms of biological role, involved in zinc efflux across the cytoplasmic membrane, thus reducing zinc accumulation in the cytoplasm and rendering bacteria more resistant to zinc. It may contribute to zinc homeostasis at low concentrations of zinc. This chain is Zinc transporter ZitB, found in Salmonella typhi.